Here is an 869-residue protein sequence, read N- to C-terminus: Valine--tRNA ligase (869 aa).

The 'HIGH' region motif lies at 47–57; that stretch reads PYPTGNFHIGN. Positions 521 to 525 match the 'KMSKS' region motif; that stretch reads KMSKS. Lys-524 serves as a coordination point for ATP.

This sequence belongs to the class-I aminoacyl-tRNA synthetase family. ValS type 2 subfamily.

The protein localises to the cytoplasm. It carries out the reaction tRNA(Val) + L-valine + ATP = L-valyl-tRNA(Val) + AMP + diphosphate. Catalyzes the attachment of valine to tRNA(Val). As ValRS can inadvertently accommodate and process structurally similar amino acids such as threonine, to avoid such errors, it has a 'posttransfer' editing activity that hydrolyzes mischarged Thr-tRNA(Val) in a tRNA-dependent manner. This is Valine--tRNA ligase from Methanosarcina acetivorans (strain ATCC 35395 / DSM 2834 / JCM 12185 / C2A).